A 117-amino-acid chain; its full sequence is Prefoldin subunit beta (117 aa).

Belongs to the prefoldin subunit beta family. In terms of assembly, heterohexamer of two alpha and four beta subunits.

Its subcellular location is the cytoplasm. Molecular chaperone capable of stabilizing a range of proteins. Seems to fulfill an ATP-independent, HSP70-like function in archaeal de novo protein folding. In Thermococcus kodakarensis (strain ATCC BAA-918 / JCM 12380 / KOD1) (Pyrococcus kodakaraensis (strain KOD1)), this protein is Prefoldin subunit beta.